A 269-amino-acid chain; its full sequence is MSEMMIVAVTGGKGGTGKSTLSANLFFYFIENYKTALIDCDVETPNLPYLTGCEDLFLAREVFIEVPNIEEGKTYNYNNVCKEGALLKVGDKLIFIEDLCSGCKACGINSNITFKKKSIGKIYEKKFDNGYLIVGKSNLGERKTAKIVTETKKYGLSKNCEINIVDTAAGTHCNVVRALINADKVLIVTEPTPFGVSDAKRIIKVVEKLNIPYKIVLNRYGISDLKIGYNFKIPYDKRIVECYCKGESFLKYNDLRNYIEEIANWIIWG.

ATP is bound by residues 12–19 and 130–137; these read GKGGTGKS and GYLIVGKS.

The protein to M.jannaschii MJ0578.

This is an uncharacterized protein from Methanocaldococcus jannaschii (strain ATCC 43067 / DSM 2661 / JAL-1 / JCM 10045 / NBRC 100440) (Methanococcus jannaschii).